Here is a 372-residue protein sequence, read N- to C-terminus: Y-box-binding protein 3 (372 aa).

The interval 1–82 is disordered; the sequence is MSEAGEATTT…LATAAGSEDA (82 aa). Ser2 bears the N-acetylserine mark. Ser2 carries the post-translational modification Phosphoserine. Residues 7-28 show a composition bias toward low complexity; it reads ATTTTTTTLPQAPTEAAAAAPQ. Phosphoserine is present on Ser34. The segment covering 35–79 has biased composition (low complexity); sequence PVGSGAPQAAAPAPAAHVAGNPGGDAAPAATGTAAAASLATAAGS. Residues 93–157 enclose the CSD domain; that stretch reads GTVKWFNVRN…GEKGAEAANV (65 aa). Phosphoserine is present on residues Ser134, Ser201, Ser203, and Ser204. Residues 181–372 are disordered; it reads YYGRRRGPPR…APPTQQSSAE (192 aa). Residues 222-238 are compositionally biased toward basic residues; sequence QLRRPQYRPQYRQRRFP. Arg251 is modified (omega-N-methylarginine). Residues 314–324 show a composition bias toward polar residues; it reads QQATSGPNQPS. Ser324 is subject to Phosphoserine. At Arg326 the chain carries Omega-N-methylarginine. Basic residues predominate over residues 327–340; that stretch reads RGYRRPYNYRRRPR. 3 positions are modified to phosphoserine: Ser346, Ser369, and Ser370.

As to quaternary structure, found in a mRNP complex with YBX2. Interacts with RRP1B. Highly expressed in skeletal muscle and heart.

Its subcellular location is the cytoplasm. The protein localises to the nucleus. Binds to the GM-CSF promoter. Seems to act as a repressor. Also binds to full-length mRNA and to short RNA sequences containing the consensus site 5'-UCCAUCA-3'. May have a role in translation repression. The polypeptide is Y-box-binding protein 3 (YBX3) (Homo sapiens (Human)).